The primary structure comprises 359 residues: Pyruvate dehydrogenase E1 component subunit beta, mitochondrial (359 aa).

Residues Met1–Ala30 constitute a mitochondrion transit peptide. Tyr67 carries the post-translational modification Phosphotyrosine. Glu89 is a binding site for thiamine diphosphate. Residues Ile142, Ala190, Ile191, Asp193, and Asn195 each contribute to the K(+) site. Lys354 is modified (N6-acetyllysine).

As to quaternary structure, heterotetramer of two PDHA1 and two PDHB subunits. The heterotetramer interacts with DLAT, and is part of the multimeric pyruvate dehydrogenase complex that contains multiple copies of pyruvate dehydrogenase (E1), dihydrolipoamide acetyltransferase (DLAT, E2) and lipoamide dehydrogenase (DLD, E3). These subunits are bound to an inner core composed of about 48 DLAT and 12 PDHX molecules. Interacts with DLAT. Requires thiamine diphosphate as cofactor.

The protein localises to the mitochondrion matrix. It catalyses the reaction N(6)-[(R)-lipoyl]-L-lysyl-[protein] + pyruvate + H(+) = N(6)-[(R)-S(8)-acetyldihydrolipoyl]-L-lysyl-[protein] + CO2. The pyruvate dehydrogenase complex catalyzes the overall conversion of pyruvate to acetyl-CoA and CO(2), and thereby links the glycolytic pathway to the tricarboxylic cycle. This is Pyruvate dehydrogenase E1 component subunit beta, mitochondrial (Pdhb) from Mus musculus (Mouse).